The primary structure comprises 286 residues: Diaminopimelate epimerase (286 aa).

Asparagine 22, glutamine 56, and asparagine 76 together coordinate substrate. The Proton donor role is filled by cysteine 85. Residues 86-87 (GN), asparagine 169, asparagine 202, and 220-221 (ER) each bind substrate. The active-site Proton acceptor is the cysteine 229. Residue 230–231 (GS) coordinates substrate.

The protein belongs to the diaminopimelate epimerase family. As to quaternary structure, homodimer.

It localises to the cytoplasm. It catalyses the reaction (2S,6S)-2,6-diaminopimelate = meso-2,6-diaminopimelate. The protein operates within amino-acid biosynthesis; L-lysine biosynthesis via DAP pathway; DL-2,6-diaminopimelate from LL-2,6-diaminopimelate: step 1/1. Functionally, catalyzes the stereoinversion of LL-2,6-diaminopimelate (L,L-DAP) to meso-diaminopimelate (meso-DAP), a precursor of L-lysine and an essential component of the bacterial peptidoglycan. The protein is Diaminopimelate epimerase of Buchnera aphidicola subsp. Baizongia pistaciae (strain Bp).